Reading from the N-terminus, the 1030-residue chain is Semaphorin-6A (1030 aa).

The signal sequence occupies residues 1–18 (MRSEALLLYFTLLHFAGA). Residues 19–649 (GFPEDSEPIS…KGHDQLVPVT (631 aa)) lie on the Extracellular side of the membrane. The Sema domain occupies 24–512 (SEPISISHGN…FSTCVIKVPL (489 aa)). Asn33, Asn49, and Asn65 each carry an N-linked (GlcNAc...) asparagine glycan. Disulfide bonds link Cys107/Cys117, Cys135/Cys144, Cys258/Cys369, and Cys283/Cys328. Asn282 carries an N-linked (GlcNAc...) asparagine glycan. N-linked (GlcNAc...) asparagine glycosylation is found at Asn434 and Asn461. 4 disulfide bridges follow: Cys477–Cys506, Cys515–Cys533, Cys521–Cys568, and Cys525–Cys542. Residues 650–670 (LLAIAVILAFVMGAVFSGITV) traverse the membrane as a helical segment. Residues 671-1030 (YCVCDHRRKD…TSMKPNDACT (360 aa)) are Cytoplasmic-facing. Ser698 is subject to Phosphoserine. Disordered stretches follow at residues 754-778 (ALPT…REWE), 860-897 (SSKS…SLSQ), and 912-1030 (YGVD…DACT). The span at 920–936 (YPTNSLTRSHQATTLKR) shows a compositional bias: polar residues. The span at 937 to 952 (NNTNSSNSSHLSRNQS) shows a compositional bias: low complexity. A Phosphoserine modification is found at Ser952. Composition is skewed to polar residues over residues 970 to 997 (QVHS…SLTR) and 1018 to 1030 (PLST…DACT).

This sequence belongs to the semaphorin family. In terms of assembly, active as a homodimer or oligomer. The SEMA6A homodimer interacts with a PLXNA2 homodimer, giving rise to a heterotetramer. Interacts with EVL. As to quaternary structure, (Microbial infection) Interacts with P.sordellii toxin TcsL; semaphorins SEMA6A and SEMA6B constitute the major host receptors for TcsL in the vascular endothelium.

The protein resides in the cell membrane. In terms of biological role, cell surface receptor for PLXNA2 that plays an important role in cell-cell signaling. Required for normal granule cell migration in the developing cerebellum. Promotes reorganization of the actin cytoskeleton and plays an important role in axon guidance in the developing central nervous system. Can act as repulsive axon guidance cue. Has repulsive action towards migrating granular neurons. May play a role in channeling sympathetic axons into the sympathetic chains and controlling the temporal sequence of sympathetic target innervation. Its function is as follows. (Microbial infection) Acts as a receptor for P.sordellii toxin TcsL in the in the vascular endothelium. The protein is Semaphorin-6A (SEMA6A) of Homo sapiens (Human).